Reading from the N-terminus, the 337-residue chain is F420-dependent glucose-6-phosphate dehydrogenase (337 aa).

D40 provides a ligand contact to coenzyme F420-(gamma-Glu)n. Residue H41 is the Proton donor of the active site. Residues T77 and 108–109 (TG) each bind coenzyme F420-(gamma-Glu)n. E110 functions as the Proton acceptor in the catalytic mechanism. Residues N113, 178-179 (GG), and 181-182 (VV) contribute to the coenzyme F420-(gamma-Glu)n site. Substrate-binding residues include T196, K199, K260, and R284.

Belongs to the F420-dependent glucose-6-phosphate dehydrogenase family. As to quaternary structure, homodimer.

It catalyses the reaction oxidized coenzyme F420-(gamma-L-Glu)(n) + D-glucose 6-phosphate + H(+) = 6-phospho-D-glucono-1,5-lactone + reduced coenzyme F420-(gamma-L-Glu)(n). In terms of biological role, catalyzes the coenzyme F420-dependent oxidation of glucose 6-phosphate (G6P) to 6-phosphogluconolactone. The polypeptide is F420-dependent glucose-6-phosphate dehydrogenase (Rhodococcus hoagii (strain 103S) (Rhodococcus equi)).